The primary structure comprises 140 residues: FK506-binding protein 2 (140 aa).

Positions 1-19 (MKFTTGLSVLLFFVLQVFA) are cleaved as a signal peptide. The 90-residue stretch at 43–132 (GDVVSVHYTG…IFETELVDIQ (90 aa)) folds into the PPIase FKBP-type domain.

The protein belongs to the FKBP-type PPIase family. FKBP2 subfamily.

The protein resides in the endoplasmic reticulum. It carries out the reaction [protein]-peptidylproline (omega=180) = [protein]-peptidylproline (omega=0). Inhibited by both FK506 and rapamycin. Functionally, PPIases accelerate the folding of proteins. It catalyzes the cis-trans isomerization of proline imidic peptide bonds in oligopeptides. The chain is FK506-binding protein 2 (FPR2) from Kluyveromyces lactis (strain ATCC 8585 / CBS 2359 / DSM 70799 / NBRC 1267 / NRRL Y-1140 / WM37) (Yeast).